The primary structure comprises 174 residues: Trypsin inhibitor BvTI (174 aa).

2 disulfides stabilise this stretch: Cys41–Cys84 and Cys131–Cys138.

It belongs to the protease inhibitor I3 (leguminous Kunitz-type inhibitor) family.

The protein localises to the secreted. Inhibits bovine trypsin and chymotrypsin, and human plasmin, plasma kallikrein and factor XIIa. This Bauhinia variegata (Purple orchid tree) protein is Trypsin inhibitor BvTI.